The chain runs to 1250 residues: Protein suppressor of variegation 3-7 (1250 aa).

2 disordered regions span residues 107 to 148 (LNNP…HSYH) and 160 to 186 (HDPGDSQDDDDEDDESSNGGGVDGGMR). Residues 132–141 (STKTEPSSDA) show a composition bias toward polar residues. Residues 164–175 (DSQDDDDEDDES) show a composition bias toward acidic residues. Phosphoserine occurs at positions 165, 175, and 176. 4 consecutive C2H2-type zinc fingers follow at residues 217 to 236 (CLYCNISINVNNRSRHIQQH), 319 to 343 (CRICSVRMNVEFVYLRKRHETTKGH), 425 to 446 (CTLCNCTMAITSFLRHCKTRAH), and 487 to 512 (CSVCRKRFMYGNSEIKRKNHEKSEKH). A compositionally biased stretch (basic and acidic residues) spans 343–354 (HMEALRNLDSDK). A disordered region spans residues 343-398 (HMEALRNLDSDKRSRKRKRSKSNSVTNSGGDEAEREKESEPEVGPEDAQDTPVVMM). Positions 525-564 (VGSADGRGGDNMDEEEAAASDQAQSSQTDDSEDNDDDNWS) are disordered. Residues 543 to 552 (ASDQAQSSQT) are compositionally biased toward low complexity. Acidic residues predominate over residues 553-563 (DDSEDNDDDNW). A C2H2-type 5 zinc finger spans residues 605–629 (QICKFCRVRFHNEAAKARHELSARH). Residues 642–684 (KLHQGTNTQTKHNAQDDEESQEQDEEYGEEEEDAEEDSQSNFD) are disordered. The span at 657–679 (DDEESQEQDEEYGEEEEDAEEDS) shows a compositional bias: acidic residues. 2 C2H2-type zinc fingers span residues 737–761 (CKLCEVSLYLPSSKWASKHQRTSRH) and 829–852 (CRVCDSRLPIKVFYLRQHDASRKH). The segment covering 851 to 860 (KHVENKERQR) has biased composition (basic and acidic residues). Residues 851–915 (KHVENKERQR…PLAKRSRRSM (65 aa)) form a disordered region. 2 positions are modified to phosphoserine: Ser871 and Ser873. The span at 879 to 897 (DAERQESGMDKESENDMSV) shows a compositional bias: basic and acidic residues. At Ser975 the chain carries Phosphoserine. In terms of domain architecture, BESS spans 987–1026 (RHVMDLFFDSISPTMKSLPPDLAAEGKSKIMQLVCSLELR). Low complexity predominate over residues 1032 to 1055 (ATTPTPATVSASSKWPSSTTVTPV). Disordered stretches follow at residues 1032–1060 (ATTPTPATVSASSKWPSSTTVTPVKTPPA), 1079–1116 (TTPHEYNNGQNNNNDKETVPKEPVTGASSAQVTINGSA), 1154–1180 (QSRTNVNGRLSQGGTSEAPSTPQADLS), and 1205–1236 (NTPQMQQPQQAQASITSSTPIMRGGPSSNGCQ). 2 stretches are compositionally biased toward polar residues: residues 1079 to 1091 (TTPHEYNNGQNNN) and 1104 to 1114 (GASSAQVTING). Over residues 1206 to 1224 (TPQMQQPQQAQASITSSTP) the composition is skewed to low complexity.

Interacts with Su(var)39 through the BESS domain.

The protein localises to the nucleus. Dose-limiting factor in position-effect variegation, the inactivation in some cells of a gene translocated next to heterochromatin. It could play a role in chromosome condensation. This is Protein suppressor of variegation 3-7 (Su(var)3-7) from Drosophila melanogaster (Fruit fly).